The primary structure comprises 431 residues: UDP-N-acetylglucosamine 1-carboxyvinyltransferase (431 aa).

A phosphoenolpyruvate-binding site is contributed by 22-23 (KN). Arg102 lines the UDP-N-acetyl-alpha-D-glucosamine pocket. Cys126 (proton donor) is an active-site residue. Position 126 is a 2-(S-cysteinyl)pyruvic acid O-phosphothioketal (Cys126). UDP-N-acetyl-alpha-D-glucosamine-binding positions include 131-135 (RPVDL), Asp316, and Ile338.

It belongs to the EPSP synthase family. MurA subfamily.

The protein resides in the cytoplasm. It carries out the reaction phosphoenolpyruvate + UDP-N-acetyl-alpha-D-glucosamine = UDP-N-acetyl-3-O-(1-carboxyvinyl)-alpha-D-glucosamine + phosphate. Its pathway is cell wall biogenesis; peptidoglycan biosynthesis. Its function is as follows. Cell wall formation. Adds enolpyruvyl to UDP-N-acetylglucosamine. In Beijerinckia indica subsp. indica (strain ATCC 9039 / DSM 1715 / NCIMB 8712), this protein is UDP-N-acetylglucosamine 1-carboxyvinyltransferase.